The sequence spans 77 residues: uncharacterized protein (77 aa).

Basic and acidic residues-rich tracts occupy residues 1–24 and 37–58; these read CPVAEEHFLVPAHEARGTQGEDQR and EGPKLGEERPKPEAGALEERGP. Positions 1–77 are disordered; the sequence is CPVAEEHFLV…RHGPKRKPAK (77 aa). Residues 66–77 are compositionally biased toward basic residues; the sequence is RPRHGPKRKPAK.

This is an uncharacterized protein from Macaca fascicularis (Crab-eating macaque).